An 804-amino-acid polypeptide reads, in one-letter code: Endoplasmin (804 aa).

The signal sequence occupies residues 1-21; it reads MRALWVLGLCCVLLTFGSVRA. The SRT pseudosubstrate motif motif lies at 42-44; that stretch reads SRT. An N-linked (GlcNAc...) asparagine glycan is attached at asparagine 62. Serine 64 carries the post-translational modification Phosphoserine. Asparagine 107 is a glycosylation site (N-linked (GlcNAc...) asparagine). The ATP site is built by asparagine 107, aspartate 149, and asparagine 162. Lysine 168 is subject to N6-(2-hydroxyisobutyryl)lysine. Serine 172 is modified (phosphoserine). Position 199 (phenylalanine 199) interacts with ATP. Asparagine 217 carries an N-linked (GlcNAc...) asparagine glycan. A disordered region spans residues 288-323; it reads TVEEPMEEEEAAKEEKEESDDEAAVEEEEEEKKPKT. The span at 289–317 shows a compositional bias: acidic residues; it reads VEEPMEEEEAAKEEKEESDDEAAVEEEEE. A phosphoserine mark is found at serine 306 and serine 403. The residue at position 404 (lysine 404) is an N6-succinyllysine. Residue asparagine 445 is glycosylated (N-linked (GlcNAc...) asparagine). Serine 447 is modified (phosphoserine). Lysine 479 bears the N6-acetyllysine mark. N-linked (GlcNAc...) asparagine glycosylation is found at asparagine 481 and asparagine 502. Lysine 633 is modified (N6-succinyllysine). A disordered region spans residues 750–804; it reads DPDAKVEEEPEEEPEETTEDTTEDTEQDEDEEMDVGTDEEEQETAKESTAEKDEL. Residues 757–791 show a composition bias toward acidic residues; it reads EEPEEEPEETTEDTTEDTEQDEDEEMDVGTDEEEQ. Threonine 786 is subject to Phosphothreonine. The segment covering 792 to 804 has biased composition (basic and acidic residues); it reads ETAKESTAEKDEL. The Prevents secretion from ER motif lies at 801 to 804; that stretch reads KDEL.

Belongs to the heat shock protein 90 family. Homodimer; disulfide-linked. Component of an EIF2 complex at least composed of CELF1/CUGBP1, CALR, CALR3, EIF2S1, EIF2S2, HSP90B1 and HSPA5. Part of a large chaperone multiprotein complex comprising DNAJB11, HSP90B1, HSPA5, HYOU, PDIA2, PDIA4, PDIA6, PPIB, SDF2L1, UGGT1 and very small amounts of ERP29, but not, or at very low levels, CALR nor CANX. Interacts with AIMP1; regulates its retention in the endoplasmic reticulum. Hyperglycosylated form interacts with OS9; promoting its degradation by the endoplasmic reticulum associated degradation (ERAD). Interacts with CNPY3. This interaction is disrupted in the presence of ATP. Interacts with TLR4 and TLR9, but not with TLR3. Interacts with MZB1 in a calcium-dependent manner. Interacts with METTL23. Interacts with IL1B; the interaction facilitates cargo translocation into the ERGIC. Interacts with EIF2AK3. Phosphorylated by CK2. In terms of processing, N-glycosylated cotranslationally at Asn-217 by STT3A-containing OST-A complex: this glycosylation is constitutive. In response to various stress, 5 additional facultative sites (Asn-62, Asn-107, Asn-445, Asn-481 and Asn-502) can be glycosylated post-translationally by STT3B-containing OST-B complex, leading to a hyperglycosylated form that is degraded by the ER-associated degradation (ERAD) pathway. In normal conditions, the OST-A complex together with CCDC134 prevent glycosylation at facultative sites during protein folding, thereby preventing hyperglycosylation. Mechanistically, nascent HSP90B1 is tethered during translation to a specialized CCDC134-containing translocon that forms a microenvironment for its folding, in which STT3A associates with the SRT pseudosubstrate motif, and prevents access to facultative glycosylation sites until folding is completed, rendering its facultative sites inaccessible to the OST-B complex.

The protein resides in the endoplasmic reticulum lumen. The protein localises to the sarcoplasmic reticulum lumen. It is found in the melanosome. The catalysed reaction is ATP + H2O = ADP + phosphate + H(+). Its function is as follows. ATP-dependent chaperone involved in the processing of proteins in the endoplasmic reticulum, regulating their transport. Together with MESD, acts as a modulator of the Wnt pathway by promoting the folding of LRP6, a coreceptor of the canonical Wnt pathway. When associated with CNPY3, required for proper folding of Toll-like receptors. Promotes folding and trafficking of TLR4 to the cell surface. May participate in the unfolding of cytosolic leaderless cargos (lacking the secretion signal sequence) such as the interleukin 1/IL-1 to facilitate their translocation into the ERGIC (endoplasmic reticulum-Golgi intermediate compartment) and secretion; the translocation process is mediated by the cargo receptor TMED10. The chain is Endoplasmin (HSP90B1) from Pongo abelii (Sumatran orangutan).